The primary structure comprises 475 residues: Tetratricopeptide repeat protein 29 (475 aa).

7 TPR repeats span residues 92-131 (DALR…EDAE), 136-173 (FEDV…AQLI), 182-215 (AEAH…TQGR), 234-267 (LRTY…AKEG), 274-307 (GEAS…STEL), 314-347 (GRAY…ARNN), and 354-387 (VRAS…TVEL). Residues 436-475 (DIEPDPVTEEFRGSTVETVSQNSEHLEELSRFPGDQKNET) are disordered. Residues 459 to 475 (EHLEELSRFPGDQKNET) show a composition bias toward basic and acidic residues.

It localises to the cytoplasm. The protein resides in the cytoskeleton. The protein localises to the flagellum axoneme. In terms of biological role, axonemal protein which is implicated in axonemal and/or peri-axonemal structure assembly and regulates flagellum assembly and beating and therefore sperm motility. The polypeptide is Tetratricopeptide repeat protein 29 (TTC29) (Macaca fascicularis (Crab-eating macaque)).